The primary structure comprises 88 residues: Small ribosomal subunit protein uS17 (88 aa).

It belongs to the universal ribosomal protein uS17 family. As to quaternary structure, part of the 30S ribosomal subunit.

In terms of biological role, one of the primary rRNA binding proteins, it binds specifically to the 5'-end of 16S ribosomal RNA. In Maridesulfovibrio salexigens (strain ATCC 14822 / DSM 2638 / NCIMB 8403 / VKM B-1763) (Desulfovibrio salexigens), this protein is Small ribosomal subunit protein uS17.